The chain runs to 486 residues: Bifunctional protein GlmU (486 aa).

The pyrophosphorylase stretch occupies residues 1–241 (MSASDSSSAV…ARELAGVNDR (241 aa)). UDP-N-acetyl-alpha-D-glucosamine-binding positions include 13–16 (LAAG), K27, Q84, and 89–90 (GT). D114 is a binding site for Mg(2+). Residues G151, E166, N181, and N239 each contribute to the UDP-N-acetyl-alpha-D-glucosamine site. A Mg(2+)-binding site is contributed by N239. The linker stretch occupies residues 242-262 (VQLAEAGAELNRRTVEAAMRG). The segment at 263–486 (GATIVDPATT…AQNSVPNQEG (224 aa)) is N-acetyltransferase. 2 residues coordinate UDP-N-acetyl-alpha-D-glucosamine: R344 and K362. The active-site Proton acceptor is the H374. Positions 377 and 388 each coordinate UDP-N-acetyl-alpha-D-glucosamine. Residues A391, 397–398 (NY), S416, and A434 contribute to the acetyl-CoA site. The segment at 464–486 (KRPGTAAADAAAAAQNSVPNQEG) is disordered.

This sequence in the N-terminal section; belongs to the N-acetylglucosamine-1-phosphate uridyltransferase family. The protein in the C-terminal section; belongs to the transferase hexapeptide repeat family. In terms of assembly, homotrimer. It depends on Mg(2+) as a cofactor.

The protein resides in the cytoplasm. The enzyme catalyses alpha-D-glucosamine 1-phosphate + acetyl-CoA = N-acetyl-alpha-D-glucosamine 1-phosphate + CoA + H(+). It carries out the reaction N-acetyl-alpha-D-glucosamine 1-phosphate + UTP + H(+) = UDP-N-acetyl-alpha-D-glucosamine + diphosphate. Its pathway is nucleotide-sugar biosynthesis; UDP-N-acetyl-alpha-D-glucosamine biosynthesis; N-acetyl-alpha-D-glucosamine 1-phosphate from alpha-D-glucosamine 6-phosphate (route II): step 2/2. The protein operates within nucleotide-sugar biosynthesis; UDP-N-acetyl-alpha-D-glucosamine biosynthesis; UDP-N-acetyl-alpha-D-glucosamine from N-acetyl-alpha-D-glucosamine 1-phosphate: step 1/1. It functions in the pathway bacterial outer membrane biogenesis; LPS lipid A biosynthesis. In terms of biological role, catalyzes the last two sequential reactions in the de novo biosynthetic pathway for UDP-N-acetylglucosamine (UDP-GlcNAc). The C-terminal domain catalyzes the transfer of acetyl group from acetyl coenzyme A to glucosamine-1-phosphate (GlcN-1-P) to produce N-acetylglucosamine-1-phosphate (GlcNAc-1-P), which is converted into UDP-GlcNAc by the transfer of uridine 5-monophosphate (from uridine 5-triphosphate), a reaction catalyzed by the N-terminal domain. The chain is Bifunctional protein GlmU from Corynebacterium efficiens (strain DSM 44549 / YS-314 / AJ 12310 / JCM 11189 / NBRC 100395).